The primary structure comprises 79 residues: Small ribosomal subunit protein uS17 (79 aa).

The protein belongs to the universal ribosomal protein uS17 family. In terms of assembly, part of the 30S ribosomal subunit.

One of the primary rRNA binding proteins, it binds specifically to the 5'-end of 16S ribosomal RNA. This chain is Small ribosomal subunit protein uS17, found in Orientia tsutsugamushi (strain Boryong) (Rickettsia tsutsugamushi).